Here is a 250-residue protein sequence, read N- to C-terminus: Acetylglutamate kinase (250 aa).

Substrate-binding positions include 41-42, arginine 63, and asparagine 156; that span reads GG.

The protein belongs to the acetylglutamate kinase family. ArgB subfamily.

The protein resides in the cytoplasm. The enzyme catalyses N-acetyl-L-glutamate + ATP = N-acetyl-L-glutamyl 5-phosphate + ADP. Its pathway is amino-acid biosynthesis; L-arginine biosynthesis; N(2)-acetyl-L-ornithine from L-glutamate: step 2/4. Catalyzes the ATP-dependent phosphorylation of N-acetyl-L-glutamate. The polypeptide is Acetylglutamate kinase (Listeria monocytogenes serotype 4b (strain CLIP80459)).